The primary structure comprises 75 residues: Protein BsdD (75 aa).

Functionally, involved in the non-oxidative decarboxylation and detoxification of phenolic derivatives under both aerobic and anaerobic conditions, however the precise biochemical function of BsdD in metabolism of phenolic acid is unknown. The chain is Protein BsdD from Bacillus subtilis (strain 168).